Here is a 35-residue protein sequence, read N- to C-terminus: Photosystem II reaction center protein T (35 aa).

Residues 3 to 23 (ALVYTFLLISTLGIIFFAIFF) form a helical membrane-spanning segment.

It belongs to the PsbT family. As to quaternary structure, PSII is composed of 1 copy each of membrane proteins PsbA, PsbB, PsbC, PsbD, PsbE, PsbF, PsbH, PsbI, PsbJ, PsbK, PsbL, PsbM, PsbT, PsbY, PsbZ, Psb30/Ycf12, at least 3 peripheral proteins of the oxygen-evolving complex and a large number of cofactors. It forms dimeric complexes.

It localises to the plastid. The protein localises to the chloroplast thylakoid membrane. In terms of biological role, found at the monomer-monomer interface of the photosystem II (PS II) dimer, plays a role in assembly and dimerization of PSII. PSII is a light-driven water plastoquinone oxidoreductase, using light energy to abstract electrons from H(2)O, generating a proton gradient subsequently used for ATP formation. The sequence is that of Photosystem II reaction center protein T from Aristolochia macrophylla (Dutchman's pipe vine).